The following is a 201-amino-acid chain: 3-isopropylmalate dehydratase small subunit (201 aa).

The protein belongs to the LeuD family. LeuD type 1 subfamily. Heterodimer of LeuC and LeuD.

The enzyme catalyses (2R,3S)-3-isopropylmalate = (2S)-2-isopropylmalate. Its pathway is amino-acid biosynthesis; L-leucine biosynthesis; L-leucine from 3-methyl-2-oxobutanoate: step 2/4. Catalyzes the isomerization between 2-isopropylmalate and 3-isopropylmalate, via the formation of 2-isopropylmaleate. The polypeptide is 3-isopropylmalate dehydratase small subunit (Shewanella pealeana (strain ATCC 700345 / ANG-SQ1)).